The primary structure comprises 244 residues: tRNA (guanine-N(7)-)-methyltransferase (244 aa).

Positions 1–24 are disordered; it reads MTDSHVPHPESPAVEEGEERPHRR. 4 residues coordinate S-adenosyl-L-methionine: E74, E99, D126, and D149. D149 is an active-site residue. Substrate-binding positions include K153, D185, and 222–225; that span reads TKFE.

This sequence belongs to the class I-like SAM-binding methyltransferase superfamily. TrmB family.

It catalyses the reaction guanosine(46) in tRNA + S-adenosyl-L-methionine = N(7)-methylguanosine(46) in tRNA + S-adenosyl-L-homocysteine. It functions in the pathway tRNA modification; N(7)-methylguanine-tRNA biosynthesis. Its function is as follows. Catalyzes the formation of N(7)-methylguanine at position 46 (m7G46) in tRNA. This chain is tRNA (guanine-N(7)-)-methyltransferase, found in Pseudomonas savastanoi pv. phaseolicola (strain 1448A / Race 6) (Pseudomonas syringae pv. phaseolicola (strain 1448A / Race 6)).